The sequence spans 605 residues: MALPGPAVFGPGSRGSLDEAGAEGREAAALAAAGVALEDEEEDDGRRGLLRWDGFSAWLHCVCVVGFDLELGQAVEVIYPQHSKLTDKEKTNICYLSFPDSNSGCLGDTQFCFRFRQSSGRRVSLHCLLDEFDKDLPVYLKKDPAYFYGYVYFRQVRDKTLKRGYFQKSLVLISKLPYIHFFHTVLKQIAPEYFEKNEPYLEAACNDVDRWPAPVPGKTLHLPIMGLVMKVRIPTCHDKPGTTQMVQLTQQADTHTSIILPTVHEVDLFRCFCPVFLHSQMLWELVLLGEPLVVMAPSPSESSETVLALVNCISPLKYFSDFRPYFTIHDSEFKEYTTRTQAPPSVILGVTNPFFAKTLQHWPHIIRIGDLKPAGEIPKQVKVKKLKNLKTLDSKPGVYTSYKPYLNRDEEIIKQLQKGIQQKRPSEAQSVILRRYFLELTQSFIIPLERYVASLMPLQKSISPWKSPPQLRQFLPEEFMKTLEKTGPQLTSGIKGDWIGLYRQFLKSPNFDGWFKTRRKEMTQKLEALHLEALCEEDLLLWIQKHTEVETVDLVLKLKNKLLQAGRESLPVKPDTVEKLRTHIDAIILALPDDLQGILLKTGMT.

The disordered stretch occupies residues 1–20 (MALPGPAVFGPGSRGSLDEA). In terms of domain architecture, uDENN spans 60 to 239 (HCVCVVGFDL…KVRIPTCHDK (180 aa)). At Ser-124 the chain carries Phosphoserine. Residues 265–390 (EVDLFRCFCP…VKVKKLKNLK (126 aa)) form the cDENN domain. A dDENN domain is found at 392–525 (LDSKPGVYTS…KTRRKEMTQK (134 aa)). Residue Lys-507 is modified to N6-methyllysine.

This sequence belongs to the DENND6 family.

The protein resides in the recycling endosome. Its subcellular location is the cytoplasm. Guanine nucleotide exchange factor (GEF) for RAB14. Component of an endocytic recycling pathway that is required for the control of ADAM10 transport, shedding of N-cadherin/CDH2 by ADAM9 or ADAM10 and regulation of cell-cell junctions. Required for RAB14 recruitment to recycling endosomes. In Mus musculus (Mouse), this protein is Protein DENND6A (Dennd6a).